Consider the following 640-residue polypeptide: Threonine--tRNA ligase (640 aa).

The TGS domain occupies methionine 1–threonine 61. The catalytic stretch occupies residues aspartate 242–proline 533. Positions 333, 384, and 510 each coordinate Zn(2+).

The protein belongs to the class-II aminoacyl-tRNA synthetase family. Homodimer. Requires Zn(2+) as cofactor.

It is found in the cytoplasm. The catalysed reaction is tRNA(Thr) + L-threonine + ATP = L-threonyl-tRNA(Thr) + AMP + diphosphate + H(+). Its function is as follows. Catalyzes the attachment of threonine to tRNA(Thr) in a two-step reaction: L-threonine is first activated by ATP to form Thr-AMP and then transferred to the acceptor end of tRNA(Thr). Also edits incorrectly charged L-seryl-tRNA(Thr). The polypeptide is Threonine--tRNA ligase (Pseudomonas fluorescens (strain Pf0-1)).